Here is a 471-residue protein sequence, read N- to C-terminus: Proton-coupled amino acid transporter-like protein pathetic (471 aa).

An N-linked (GlcNAc...) asparagine glycan is attached at Asn61. 10 helical membrane passes run 81 to 101 (FAFMCSGLIMGIFSTIFTAFI), 153 to 173 (ILFGLFLTYFGTCSVYTVIVA), 187 to 207 (AVSLRMLICIMLVPLILIAWV), 216 to 236 (VSMVANVFMGLGLGITFYYLV), 253 to 273 (LPQFFSITIFAMEAIGVVMPL), 283 to 303 (FLGICGVLSQGMSGVTLIYML), 337 to 357 (LISLAVYCTFGLQFFVCLEII), 375 to 395 (VLRTVLVTAAVVLAVAVPTIG), 397 to 417 (FMGLIGAFCFSILGLIFPVVI), and 432 to 452 (WILWKNAIITLCGIGALVFGT).

Belongs to the amino acid/polyamine transporter 2 family. In terms of tissue distribution, in third instar larvae, expressed at highest levels in the brain and digestive system with particularly high levels in surface glia of the brain (at protein level). In third instar larvae, expressed in all cells of the body wall (at protein level). Within the body wall of third instar larvae, most highly expressed in epithelial cells and sensory neurons. Expressed at a similar level in all da neurons (at protein level). Widely expressed during embryonic and late larval stages. Levels are highly dynamic in embryogenesis with surges of expression in many structures, including muscle primordia, salivary glands, proventriculus, trachea and gonads. Expressed in all or most cells of larval imaginal disks. Expression is also particularly strong in the pouch and hinge regions of the wing disk and in the morphogenetic furrow of the eye disk.

The protein resides in the cell membrane. It localises to the lysosome membrane. The protein localises to the late endosome membrane. It is found in the cell projection. Its subcellular location is the axon. The protein resides in the dendrite. It localises to the perikaryon. The protein localises to the cytoplasm. Its function is as follows. Amino acid transporter which has pH-dependent electrogenic transport activity for alanine and glycine but not for proline. Plays a role in positive regulation of growth by directly or indirectly modulating the effects of the TOR signaling pathway. Required in a cell-autonomous manner for dendrite growth in neurons with large dendrite arbors. In Drosophila melanogaster (Fruit fly), this protein is Proton-coupled amino acid transporter-like protein pathetic.